Consider the following 53-residue polypeptide: uncharacterized protein (53 aa).

This is an uncharacterized protein from Haemophilus influenzae (strain ATCC 51907 / DSM 11121 / KW20 / Rd).